Consider the following 544-residue polypeptide: Chaperonin GroEL (544 aa).

Residues 30-33 (TLGP), lysine 51, 87-91 (DGTTT), glycine 415, 481-483 (DAL), and aspartate 497 each bind ATP.

This sequence belongs to the chaperonin (HSP60) family. In terms of assembly, forms a cylinder of 14 subunits composed of two heptameric rings stacked back-to-back. Interacts with the co-chaperonin GroES.

It localises to the cytoplasm. It carries out the reaction ATP + H2O + a folded polypeptide = ADP + phosphate + an unfolded polypeptide.. In terms of biological role, together with its co-chaperonin GroES, plays an essential role in assisting protein folding. The GroEL-GroES system forms a nano-cage that allows encapsulation of the non-native substrate proteins and provides a physical environment optimized to promote and accelerate protein folding. This chain is Chaperonin GroEL, found in Chlamydia trachomatis serovar D (strain ATCC VR-885 / DSM 19411 / UW-3/Cx).